Reading from the N-terminus, the 295-residue chain is Protease Rv3090 (295 aa).

A run of 2 helical transmembrane segments spans residues 2–22 and 37–57; these read TWQI…ALFW and VTIA…FTIV.

It localises to the cell membrane. Its subcellular location is the secreted. The protein localises to the cell wall. Protease that triggers late cell apoptosis and contributes to the pathogenicity and dissemination of M.tuberculosis. In a mouse model of infection, can induce hepatocyte and lung cell apoptosis and cause pathological damage to the spleen, liver and lungs. Specifically stimulates the secretion of inflammatory cytokines including TNF-alpha, IL-6 and IL-1 beta. Can degrade casein in vitro. The protein is Protease Rv3090 of Mycobacterium tuberculosis (strain ATCC 25618 / H37Rv).